A 60-amino-acid polypeptide reads, in one-letter code: UPF0434 protein YcaR (60 aa).

Belongs to the UPF0434 family.

This Salmonella agona (strain SL483) protein is UPF0434 protein YcaR.